We begin with the raw amino-acid sequence, 456 residues long: Adenylosuccinate synthetase isozyme 1 (456 aa).

A disordered region spans residues methionine 1–asparagine 30. GTP contacts are provided by residues glycine 41–lysine 47 and glycine 69–threonine 71. The active-site Proton acceptor is the aspartate 42. Positions 42 and 69 each coordinate Mg(2+). Aspartate 42 is a binding site for substrate. IMP-binding positions include aspartate 42–lysine 45 and asparagine 67–histidine 70. Histidine 70 serves as the catalytic Proton donor. Serine 130 carries the phosphoserine modification. Threonine 162, arginine 176, asparagine 255, threonine 270, and arginine 334 together coordinate IMP. Residue valine 330 to arginine 336 coordinates substrate. GTP is bound by residues arginine 336, lysine 362–aspartate 364, and glycine 444–lysine 447.

It belongs to the adenylosuccinate synthetase family. In terms of assembly, homodimer. The cofactor is Mg(2+).

The protein localises to the cytoplasm. It catalyses the reaction IMP + L-aspartate + GTP = N(6)-(1,2-dicarboxyethyl)-AMP + GDP + phosphate + 2 H(+). It participates in purine metabolism; AMP biosynthesis via de novo pathway; AMP from IMP: step 1/2. Functionally, component of the purine nucleotide cycle (PNC), which interconverts IMP and AMP to regulate the nucleotide levels in various tissues, and which contributes to glycolysis and ammoniagenesis. Catalyzes the first committed step in the biosynthesis of AMP from IMP. This chain is Adenylosuccinate synthetase isozyme 1 (adss1), found in Danio rerio (Zebrafish).